Consider the following 177-residue polypeptide: MSEFITVARPYAKAAFDFAVEHQSVERWQDMLAFAAEVTKNEQMAELLSGALAPETLAESFIAVCGEQLDENSQNLIRVMAENGRLNALPDVLEQFIHLRAVSEATAEVDVISAAALSEQQLAKISAAMEKRLSRKVKLNCKIDKSVMAGVIIRAGDMVIDGSVRGRLERLADVLQS.

The protein belongs to the ATPase delta chain family. As to quaternary structure, F-type ATPases have 2 components, F(1) - the catalytic core - and F(0) - the membrane proton channel. F(1) has five subunits: alpha(3), beta(3), gamma(1), delta(1), epsilon(1). F(0) has three main subunits: a(1), b(2) and c(10-14). The alpha and beta chains form an alternating ring which encloses part of the gamma chain. F(1) is attached to F(0) by a central stalk formed by the gamma and epsilon chains, while a peripheral stalk is formed by the delta and b chains.

Its subcellular location is the cell inner membrane. F(1)F(0) ATP synthase produces ATP from ADP in the presence of a proton or sodium gradient. F-type ATPases consist of two structural domains, F(1) containing the extramembraneous catalytic core and F(0) containing the membrane proton channel, linked together by a central stalk and a peripheral stalk. During catalysis, ATP synthesis in the catalytic domain of F(1) is coupled via a rotary mechanism of the central stalk subunits to proton translocation. In terms of biological role, this protein is part of the stalk that links CF(0) to CF(1). It either transmits conformational changes from CF(0) to CF(1) or is implicated in proton conduction. In Shigella dysenteriae serotype 1 (strain Sd197), this protein is ATP synthase subunit delta.